The chain runs to 148 residues: UPF0179 protein UNCMA_27840 (148 aa).

This sequence belongs to the UPF0179 family.

In Methanocella arvoryzae (strain DSM 22066 / NBRC 105507 / MRE50), this protein is UPF0179 protein UNCMA_27840.